Reading from the N-terminus, the 455-residue chain is Epoxide hydrolase 1 (455 aa).

The chain crosses the membrane as a helical; Signal-anchor for type III membrane protein span at residues 1-21 (MWLELVLASLLGFVIYWFVSR). Residues 22 to 455 (DKEETLPLGD…RKFVSLAELQ (434 aa)) lie on the Cytoplasmic side of the membrane. The active-site Nucleophile is aspartate 226. Residue arginine 295 is modified to Dimethylated arginine. Tyrosine 374 serves as the catalytic Proton donor. The Proton acceptor role is filled by histidine 431. Lysine 439 is subject to N6-acetyllysine.

This sequence belongs to the peptidase S33 family.

It localises to the microsome membrane. The protein resides in the endoplasmic reticulum membrane. It catalyses the reaction cis-stilbene oxide + H2O = (1R,2R)-hydrobenzoin. The enzyme catalyses 1-(4-methoxyphenyl)-N-methyl-N-[(3-methyloxetan-3-yl)methyl]methanamine + H2O = 2-{[(4-methoxybenzyl)(methyl)amino]methyl}-2-methylpropane-1,3-diol. The catalysed reaction is 8,9-epoxy-(5Z,11Z,14Z)-eicosatrienoate + H2O = 8,9-dihydroxy-(5Z,11Z,14Z)-eicosatrienoate. It carries out the reaction 11,12-epoxy-(5Z,8Z,14Z)-eicosatrienoate + H2O = 11,12-dihydroxy-(5Z,8Z,14Z)-eicosatrienoate. It catalyses the reaction 2-(5Z,8Z,11Z,14Z-eicosatetraenoyl)-glycerol + H2O = glycerol + (5Z,8Z,11Z,14Z)-eicosatetraenoate + H(+). Inhibited by 10-hydroxystearamide and methoxy-arachidonyl fluorophosphate. Functionally, biotransformation enzyme that catalyzes the hydrolysis of arene and aliphatic epoxides to less reactive and more water soluble dihydrodiols by the trans addition of water. May play a role in the metabolism of endogenous lipids such as epoxide-containing fatty acids. Metabolizes the abundant endocannabinoid 2-arachidonoylglycerol (2-AG) to free arachidonic acid (AA) and glycerol. Binds 20(S)-hydroxycholesterol (20(S)-OHC). The sequence is that of Epoxide hydrolase 1 from Rattus norvegicus (Rat).